Reading from the N-terminus, the 293-residue chain is D-alanine--D-alanine ligase (293 aa).

Residues 98–291 (KIIWEQHSLT…FNKLVTSIIN (194 aa)) enclose the ATP-grasp domain. An ATP-binding site is contributed by 124–177 (NFPLPWAVKPTLEGSSIGISKVDNQMQLNDALMLAWQYAPYALIEQWIKGDEYT). The Mg(2+) site is built by Asp-245, Glu-258, and Asn-260.

This sequence belongs to the D-alanine--D-alanine ligase family. The cofactor is Mg(2+). Mn(2+) serves as cofactor.

It localises to the cytoplasm. It carries out the reaction 2 D-alanine + ATP = D-alanyl-D-alanine + ADP + phosphate + H(+). It participates in cell wall biogenesis; peptidoglycan biosynthesis. Cell wall formation. The sequence is that of D-alanine--D-alanine ligase from Vesicomyosocius okutanii subsp. Calyptogena okutanii (strain HA).